A 1127-amino-acid chain; its full sequence is Genome polyprotein (1127 aa).

The interaction with host EXOC1 stretch occupies residues 1 to 15; that stretch reads MNNQRKKARSTPFNM. Topologically, residues 1 to 101 are cytoplasmic; sequence MNNQRKKARS…LNILNRRRRT (101 aa). The tract at residues 37–72 is hydrophobic; homodimerization of capsid protein C; the sequence is MLQGRGPLKLFMALVALPRFLTIPPTAGILKRWGTI. Positions 101 to 114 are cleaved as a propeptide — ER anchor for the capsid protein C, removed in mature form by serine protease NS3; sequence TAGVIIMLIPTVMA. A helical membrane pass occupies residues 102-122; sequence AGVIIMLIPTVMAFHLTTRNG. Residues 123-238 are Extracellular-facing; that stretch reads EPHMIVSRQE…GAWKRACRME (116 aa). A glycan (N-linked (GlcNAc...) asparagine; by host) is linked at asparagine 183. A helical transmembrane segment spans residues 239–259; the sequence is TWILRHPGFTIMAAILAYTIG. Residues 260–265 lie on the Cytoplasmic side of the membrane; it reads TTHFQR. The chain crosses the membrane as a helical span at residues 266-280; it reads GLILILQTAVAPSMT. Over 281–725 the chain is Extracellular; the sequence is MRCIGISNRD…LHQVFGAIYG (445 aa). Disulfide bonds link cysteine 283/cysteine 310, cysteine 340/cysteine 401, cysteine 354/cysteine 385, and cysteine 372/cysteine 396. Residue asparagine 347 is glycosylated (N-linked (GlcNAc...) asparagine; by host). Positions 378 to 391 are fusion peptide; the sequence is DRGWGNGCGLFGKG. Residue asparagine 433 is glycosylated (N-linked (GlcNAc...) asparagine; by host). Cystine bridges form between cysteine 465/cysteine 565 and cysteine 582/cysteine 613. A helical transmembrane segment spans residues 726–746; sequence AAFSGVSWTMKILIGVIITWI. The Cytoplasmic segment spans residues 747 to 754; sequence GMNSRSTS. Residues 755–773 traverse the membrane as a helical segment; the sequence is LSVSLVLVGVITLYLGAMV. Residues 774–1127 lie on the Extracellular side of the membrane; sequence QADSGCVVSW…ENLVTSLVTA (354 aa). Cystine bridges form between cysteine 779/cysteine 790, cysteine 830/cysteine 918, cysteine 954/cysteine 998, cysteine 1055/cysteine 1104, and cysteine 1066/cysteine 1088. Residues asparagine 905 and asparagine 982 are each glycosylated (N-linked (GlcNAc...) asparagine; by host).

As to quaternary structure, homodimer. Interacts (via N-terminus) with host EXOC1 (via C-terminus); this interaction results in EXOC1 degradation through the proteasome degradation pathway. Forms heterodimers with envelope protein E in the endoplasmic reticulum and Golgi. In terms of assembly, homodimer; in the endoplasmic reticulum and Golgi. Interacts with protein prM. Interacts with non-structural protein 1. As to quaternary structure, homodimer; Homohexamer when secreted. Interacts with envelope protein E. In terms of processing, specific enzymatic cleavages in vivo yield mature proteins. Cleavages in the lumen of endoplasmic reticulum are performed by host signal peptidase, wereas cleavages in the cytoplasmic side are performed by the Serine protease NS3. Signal cleavage at the 2K-4B site requires a prior NS3 protease-mediated cleavage at the 4A-2K site. Post-translationally, cleaved in post-Golgi vesicles by a host furin, releasing the mature small envelope protein M, and peptide pr. This cleavage is incomplete as up to 30% of viral particles still carry uncleaved prM. N-glycosylated. In terms of processing, N-glycosylated. The excreted form is glycosylated and this is required for efficient secretion of the protein from infected cells.

Its subcellular location is the virion. The protein resides in the host nucleus. The protein localises to the host cytoplasm. It localises to the host perinuclear region. It is found in the secreted. Its subcellular location is the virion membrane. The protein resides in the host endoplasmic reticulum membrane. Its function is as follows. Plays a role in virus budding by binding to the cell membrane and gathering the viral RNA into a nucleocapsid that forms the core of a mature virus particle. During virus entry, may induce genome penetration into the host cytoplasm after hemifusion induced by the surface proteins. Can migrate to the cell nucleus where it modulates host functions. Overcomes the anti-viral effects of host EXOC1 by sequestering and degrading the latter through the proteasome degradation pathway. In terms of biological role, inhibits RNA silencing by interfering with host Dicer. Functionally, prevents premature fusion activity of envelope proteins in trans-Golgi by binding to envelope protein E at pH6.0. After virion release in extracellular space, gets dissociated from E dimers. Acts as a chaperone for envelope protein E during intracellular virion assembly by masking and inactivating envelope protein E fusion peptide. prM is the only viral peptide matured by host furin in the trans-Golgi network probably to avoid catastrophic activation of the viral fusion activity in acidic GolGi compartment prior to virion release. prM-E cleavage is inefficient, and many virions are only partially matured. These uncleaved prM would play a role in immune evasion. Its function is as follows. May play a role in virus budding. Exerts cytotoxic effects by activating a mitochondrial apoptotic pathway through M ectodomain. May display a viroporin activity. In terms of biological role, binds to host cell surface receptor and mediates fusion between viral and cellular membranes. Envelope protein is synthesized in the endoplasmic reticulum in the form of heterodimer with protein prM. They play a role in virion budding in the ER, and the newly formed immature particle is covered with 60 spikes composed of heterodimer between precursor prM and envelope protein E. The virion is transported to the Golgi apparatus where the low pH causes dissociation of PrM-E heterodimers and formation of E homodimers. prM-E cleavage is inefficient, and many virions are only partially matured. These uncleaved prM would play a role in immune evasion. Functionally, involved in immune evasion, pathogenesis and viral replication. Once cleaved off the polyprotein, is targeted to three destinations: the viral replication cycle, the plasma membrane and the extracellular compartment. Essential for viral replication. Required for formation of the replication complex and recruitment of other non-structural proteins to the ER-derived membrane structures. Excreted as a hexameric lipoparticle that plays a role against host immune response. Antagonizing the complement function. Binds to the host macrophages and dendritic cells. Inhibits signal transduction originating from Toll-like receptor 3 (TLR3). Disrupts the host endothelial glycocalyx layer of host pulmonary microvascular endothelial cells, inducing degradation of sialic acid and shedding of heparan sulfate proteoglycans. NS1 induces expression of sialidases, heparanase, and activates cathepsin L, which activates heparanase via enzymatic cleavage. These effects are probably linked to the endothelial hyperpermeability observed in severe dengue disease. The protein is Genome polyprotein of Dengue virus type 2 (strain China/D2-04) (DENV-2).